We begin with the raw amino-acid sequence, 305 residues long: Homoserine kinase (305 aa).

95 to 105 (PHGRGLGSSSA) provides a ligand contact to ATP.

Belongs to the GHMP kinase family. Homoserine kinase subfamily.

It is found in the cytoplasm. The catalysed reaction is L-homoserine + ATP = O-phospho-L-homoserine + ADP + H(+). It functions in the pathway amino-acid biosynthesis; L-threonine biosynthesis; L-threonine from L-aspartate: step 4/5. Catalyzes the ATP-dependent phosphorylation of L-homoserine to L-homoserine phosphate. This Streptomyces avermitilis (strain ATCC 31267 / DSM 46492 / JCM 5070 / NBRC 14893 / NCIMB 12804 / NRRL 8165 / MA-4680) protein is Homoserine kinase.